The chain runs to 438 residues: UDP-N-acetylmuramoylalanine--D-glutamate ligase (438 aa).

112 to 118 is an ATP binding site; it reads GSNGKST.

This sequence belongs to the MurCDEF family.

The protein resides in the cytoplasm. It carries out the reaction UDP-N-acetyl-alpha-D-muramoyl-L-alanine + D-glutamate + ATP = UDP-N-acetyl-alpha-D-muramoyl-L-alanyl-D-glutamate + ADP + phosphate + H(+). It functions in the pathway cell wall biogenesis; peptidoglycan biosynthesis. Its function is as follows. Cell wall formation. Catalyzes the addition of glutamate to the nucleotide precursor UDP-N-acetylmuramoyl-L-alanine (UMA). The chain is UDP-N-acetylmuramoylalanine--D-glutamate ligase from Yersinia pseudotuberculosis serotype I (strain IP32953).